The chain runs to 341 residues: Ketol-acid reductoisomerase (NADP(+)) (341 aa).

One can recognise a KARI N-terminal Rossmann domain in the interval 3 to 184 (LKVYYDKDCD…GGGRSGIIET (182 aa)). NADP(+) is bound by residues 26–29 (FGSQ), Ser-54, and 84–87 (DELQ). His-109 is an active-site residue. Gly-135 lines the NADP(+) pocket. The region spanning 185-330 (TFKDETETDL…GRLRAMMPWI (146 aa)) is the KARI C-terminal knotted domain. Mg(2+) contacts are provided by Asp-193, Glu-197, Glu-229, and Glu-233. Position 254 (Ser-254) interacts with substrate.

The protein belongs to the ketol-acid reductoisomerase family. Requires Mg(2+) as cofactor.

It catalyses the reaction (2R)-2,3-dihydroxy-3-methylbutanoate + NADP(+) = (2S)-2-acetolactate + NADPH + H(+). The catalysed reaction is (2R,3R)-2,3-dihydroxy-3-methylpentanoate + NADP(+) = (S)-2-ethyl-2-hydroxy-3-oxobutanoate + NADPH + H(+). It functions in the pathway amino-acid biosynthesis; L-isoleucine biosynthesis; L-isoleucine from 2-oxobutanoate: step 2/4. Its pathway is amino-acid biosynthesis; L-valine biosynthesis; L-valine from pyruvate: step 2/4. Its function is as follows. Involved in the biosynthesis of branched-chain amino acids (BCAA). Catalyzes an alkyl-migration followed by a ketol-acid reduction of (S)-2-acetolactate (S2AL) to yield (R)-2,3-dihydroxy-isovalerate. In the isomerase reaction, S2AL is rearranged via a Mg-dependent methyl migration to produce 3-hydroxy-3-methyl-2-ketobutyrate (HMKB). In the reductase reaction, this 2-ketoacid undergoes a metal-dependent reduction by NADPH to yield (R)-2,3-dihydroxy-isovalerate. The chain is Ketol-acid reductoisomerase (NADP(+)) from Helicobacter hepaticus (strain ATCC 51449 / 3B1).